A 311-amino-acid chain; its full sequence is MADTLNVGVNLEAFSQAIHCIQALRSSVTRVFDCLKDGMKNKESQEVRERAFVSEFQDNLHCVNRDLNELERLSNLVGKPSENHPLHNSGLLSLDPVHDKTPLYSQLLQAYKWSNKLQFHAGLASGLLNQQSLKRSANQMGVSAKRRPKVQPTTLALPPQYIDDVISRIDRMFPEMTIQLSRPNGSSAMLLVTLGKVLKVVVVMRSLFIDRTIVKGYNENVYTEDGKLDIWSKSNYQVFQKVTDHATTALLHYQLPQMPDVVVRSFMTWLRSYIKLFQAPCQRCGKFLQDGLPPTWRDFRTLEAFHDSCRQ.

It belongs to the Mediator complex subunit 27 family. As to quaternary structure, component of the Mediator complex.

Its subcellular location is the nucleus. Its function is as follows. Component of the Mediator complex, a coactivator involved in the regulated transcription of nearly all RNA polymerase II-dependent genes. Mediator functions as a bridge to convey information from gene-specific regulatory proteins to the basal RNA polymerase II transcription machinery. Mediator is recruited to promoters by direct interactions with regulatory proteins and serves as a scaffold for the assembly of a functional preinitiation complex with RNA polymerase II and the general transcription factors. The sequence is that of Mediator of RNA polymerase II transcription subunit 27-A (med27-a) from Xenopus laevis (African clawed frog).